The following is a 54-amino-acid chain: ATP synthase F(0) complex subunit 8 (54 aa).

A helical transmembrane segment spans residues 8-24; that stretch reads PWFSIMLLTWFTFSLLI.

This sequence belongs to the ATPase protein 8 family. As to quaternary structure, component of the ATP synthase complex composed at least of ATP5F1A/subunit alpha, ATP5F1B/subunit beta, ATP5MC1/subunit c (homooctomer), MT-ATP6/subunit a, MT-ATP8/subunit 8, ATP5ME/subunit e, ATP5MF/subunit f, ATP5MG/subunit g, ATP5MK/subunit k, ATP5MJ/subunit j, ATP5F1C/subunit gamma, ATP5F1D/subunit delta, ATP5F1E/subunit epsilon, ATP5PF/subunit F6, ATP5PB/subunit b, ATP5PD/subunit d, ATP5PO/subunit OSCP. ATP synthase complex consists of a soluble F(1) head domain (subunits alpha(3) and beta(3)) - the catalytic core - and a membrane F(0) domain - the membrane proton channel (subunits c, a, 8, e, f, g, k and j). These two domains are linked by a central stalk (subunits gamma, delta, and epsilon) rotating inside the F1 region and a stationary peripheral stalk (subunits F6, b, d, and OSCP).

The protein localises to the mitochondrion membrane. Functionally, subunit 8, of the mitochondrial membrane ATP synthase complex (F(1)F(0) ATP synthase or Complex V) that produces ATP from ADP in the presence of a proton gradient across the membrane which is generated by electron transport complexes of the respiratory chain. ATP synthase complex consist of a soluble F(1) head domain - the catalytic core - and a membrane F(1) domain - the membrane proton channel. These two domains are linked by a central stalk rotating inside the F(1) region and a stationary peripheral stalk. During catalysis, ATP synthesis in the catalytic domain of F(1) is coupled via a rotary mechanism of the central stalk subunits to proton translocation. In vivo, can only synthesize ATP although its ATP hydrolase activity can be activated artificially in vitro. Part of the complex F(0) domain. This chain is ATP synthase F(0) complex subunit 8, found in Gallus gallus (Chicken).